The sequence spans 85 residues: uncharacterized protein (85 aa).

Belongs to the ycf76 family.

It localises to the plastid. It is found in the chloroplast. This is an uncharacterized protein from Oryza sativa subsp. japonica (Rice).